The sequence spans 303 residues: Phosphatidylglycerol--prolipoprotein diacylglyceryl transferase (303 aa).

3 consecutive transmembrane segments (helical) span residues 18–38, 58–78, and 107–127; these read VGFF…LIGL, LLPI…VIFE, and WQGG…ILIF. Arg-154 lines the a 1,2-diacyl-sn-glycero-3-phospho-(1'-sn-glycerol) pocket. Transmembrane regions (helical) follow at residues 193-213 and 266-286; these read PTFL…ISLI and IAQL…FWIY.

This sequence belongs to the Lgt family.

The protein resides in the cell inner membrane. It carries out the reaction L-cysteinyl-[prolipoprotein] + a 1,2-diacyl-sn-glycero-3-phospho-(1'-sn-glycerol) = an S-1,2-diacyl-sn-glyceryl-L-cysteinyl-[prolipoprotein] + sn-glycerol 1-phosphate + H(+). It functions in the pathway protein modification; lipoprotein biosynthesis (diacylglyceryl transfer). Functionally, catalyzes the transfer of the diacylglyceryl group from phosphatidylglycerol to the sulfhydryl group of the N-terminal cysteine of a prolipoprotein, the first step in the formation of mature lipoproteins. The polypeptide is Phosphatidylglycerol--prolipoprotein diacylglyceryl transferase (Prochlorococcus marinus (strain MIT 9211)).